The primary structure comprises 516 residues: Glycosyltransferase-like protein gnt15 (516 aa).

At 1–24 (MSNFYNNNPRRNTFRLTERIKKKP) the chain is on the cytoplasmic side. Residues 25-45 (YQTLIVFILIFLFLYVFGPFG) traverse the membrane as a helical; Signal-anchor for type II membrane protein segment. The Extracellular portion of the chain corresponds to 46 to 516 (EKKSNNNNNN…NDNCLTREHW (471 aa)). A glycan (N-linked (GlcNAc...) asparagine) is linked at asparagine 152. A disordered region spans residues 199-250 (DTSNNNNNNNNNNNNNNNNNNNNNNNNNNNNNNNENNDNDNGNNNNNNDNEK). A compositionally biased stretch (low complexity) spans 202 to 246 (NNNNNNNNNNNNNNNNNNNNNNNNNNNNNNNENNDNDNGNNNNNN). N-linked (GlcNAc...) asparagine glycans are attached at residues asparagine 386 and asparagine 412.

Belongs to the glycosyltransferase 8 family. Highly divergent.

The protein resides in the membrane. In terms of biological role, may have a role in modulating cell adhesion and glycosylation. Essential for development. The polypeptide is Glycosyltransferase-like protein gnt15 (gnt15) (Dictyostelium discoideum (Social amoeba)).